Consider the following 332-residue polypeptide: Probable sugar phosphate/phosphate translocator At1g53660 (332 aa).

The next 10 helical transmembrane spans lie at 19–39 (ASIL…KWVL), 46–66 (FPYP…LCFL), 82–102 (LEIY…TLWL), 120–140 (AIMP…IMSC), 143–163 (LLIM…ELNI), 165–185 (WVGV…LILM), 199–219 (LSLM…PWIF), 233–253 (LVLS…FLVI), 259–281 (LTIR…LLFA), and 285–304 (LTII…ATYN). Positions 312 to 322 (ESITLVSQSPK) are enriched in polar residues. The interval 312–332 (ESITLVSQSPKNSDKKPDGPL) is disordered. Positions 323–332 (NSDKKPDGPL) are enriched in basic and acidic residues.

This sequence belongs to the TPT transporter family. TPT (TC 2.A.7.9) subfamily.

Its subcellular location is the membrane. This Arabidopsis thaliana (Mouse-ear cress) protein is Probable sugar phosphate/phosphate translocator At1g53660.